A 267-amino-acid polypeptide reads, in one-letter code: MKVSIFSNNGLSSQKVATALQKGLTAAGVPIDSLDPDVVVTVGGDGTLLSAFHHYNDRLDKVRFVGIHTGHLGFYTDWRDYEVQELIDSLAQDNGQSVSYPLLTIQVEYADGTHPDQALALNESTIKKVSGTMVADVYIKDELFESFRGDGLCISTPTGSTAYNKSVGGAVLNPRFNAVQMAEIASINNLVFRTLGSPLIIPADEWIRIEPADPTDNVLMCDQLGIEGRPIKAIMYRIARQRIAFAEYRHTHFWQRVESSFIGRENA.

The active-site Proton acceptor is the D45. Residues D45–G46, N122–E123, R148, D150, T161–S166, A185, and Q223 each bind NAD(+).

Belongs to the NAD kinase family. It depends on a divalent metal cation as a cofactor.

The protein resides in the cytoplasm. The catalysed reaction is NAD(+) + ATP = ADP + NADP(+) + H(+). Involved in the regulation of the intracellular balance of NAD and NADP, and is a key enzyme in the biosynthesis of NADP. Catalyzes specifically the phosphorylation on 2'-hydroxyl of the adenosine moiety of NAD to yield NADP. In Levilactobacillus brevis (strain ATCC 367 / BCRC 12310 / CIP 105137 / JCM 1170 / LMG 11437 / NCIMB 947 / NCTC 947) (Lactobacillus brevis), this protein is NAD kinase.